The following is a 444-amino-acid chain: Presenilin sel-12 (444 aa).

The Cytoplasmic segment spans residues 1 to 45 (MPSTRRQQEGGGADAETHTVYGTNLITNRNSQEDENVVEEAELKY). Residues 46–66 (GASHVIHLFVPVSLCMALVVF) form a helical membrane-spanning segment. Topologically, residues 67 to 101 (TMNTITFYSQNNGRHLLYTPFVRETDSIVEKGLMS) are lumenal. The helical transmembrane segment at 102–122 (LGNALVMLCVVVLMTVLLIVF) threads the bilayer. The Cytoplasmic portion of the chain corresponds to 123-130 (YKYKFYKL). Residues 131-151 (IHGWLIVSSFLLLFLFTTIYV) traverse the membrane as a helical segment. Residues 152–163 (QEVLKSFDVSPS) are Lumenal-facing. The chain crosses the membrane as a helical span at residues 164-184 (ALLVLFGLGNYGVLGMMCIHW). Residues 185–189 (KGPLR) are Cytoplasmic-facing. A helical transmembrane segment spans residues 190 to 210 (LQQFYLITMSALMALVFIKYL). The Lumenal portion of the chain corresponds to 211–212 (PE). The chain crosses the membrane as a helical span at residues 213-233 (WTVWFVLFVISVWDLVAVLTP). Asp-226 is an active-site residue. Over 234–359 (KGPLRYLVET…RHEEEERGVK (126 aa)) the chain is Cytoplasmic. The segment at 275-331 (TDPREPTSSDSNTSTAFPGEASCSSETPKRPKVKRIPQKVQIESNTTASTTQNSGVR) is disordered. Polar residues-rich tracts occupy residues 282 to 300 (SSDSNTSTAFPGEASCSSE) and 315 to 329 (QIESNTTASTTQNSG). A helical membrane pass occupies residues 360–380 (LGLGDFIFYSVLLGKASSYFD). The active site involves Asp-364. Residues 381–384 (WNTT) lie on the Lumenal side of the membrane. The chain crosses the membrane as a helical span at residues 385–405 (IACYVAILIGLCFTLVLLAVF). The Cytoplasmic portion of the chain corresponds to 406-413 (KRALPALP). A PAL motif is present at residues 410–412 (PAL). The helical intramembrane region spans 414-434 (ISIFSGLIFYFCTRWIITPFV). The Cytoplasmic portion of the chain corresponds to 435-444 (TQVSQKCLLY).

Belongs to the peptidase A22A family. Homodimer. Component of the gamma-secretase complex, a complex probably composed of the presenilin homodimer (sel-12, hop-1 or spe-4), nicastrin (aph-2), aph-1 and pen-2. Interacts with sel-10. As to expression, expressed in most neurons.

It is found in the endoplasmic reticulum membrane. Its subcellular location is the golgi apparatus membrane. Functionally, probable catalytic subunit of the gamma-secretase complex, an endoprotease complex that catalyzes the intramembrane cleavage of integral membrane proteins such as Notch receptors (lin-12 or glp-1). Provides the major presenilin function compared to hop-1 and spe-4. Required cell-autonomously for correct neurite connectivity of the AIY cholinergic interneurons and their correct functioning in thermotaxis. Required for mesodermal patterning of muscle function. Promotes basement membrane gap formation during tissue remodeling. The protein is Presenilin sel-12 of Caenorhabditis elegans.